Reading from the N-terminus, the 355-residue chain is GTPase Obg (355 aa).

One can recognise an Obg domain in the interval 1-159 (MKLVDEAEIL…RLLKLELKLL (159 aa)). The 183-residue stretch at 160–342 (ADVGLLGFPN…IMKDVMAFFD (183 aa)) folds into the OBG-type G domain. Residues 166-173 (GFPNAGKS), 191-195 (FTTLY), 213-216 (DVPG), 292-295 (NKAD), and 323-325 (SAL) each bind GTP. Positions 173 and 193 each coordinate Mg(2+).

It belongs to the TRAFAC class OBG-HflX-like GTPase superfamily. OBG GTPase family. In terms of assembly, monomer. Requires Mg(2+) as cofactor.

The protein resides in the cytoplasm. Functionally, an essential GTPase which binds GTP, GDP and possibly (p)ppGpp with moderate affinity, with high nucleotide exchange rates and a fairly low GTP hydrolysis rate. Plays a role in control of the cell cycle, stress response, ribosome biogenesis and in those bacteria that undergo differentiation, in morphogenesis control. The polypeptide is GTPase Obg (Xanthomonas axonopodis pv. citri (strain 306)).